Here is a 96-residue protein sequence, read N- to C-terminus: (4S)-4-hydroxy-5-phosphonooxypentane-2,3-dione isomerase (96 aa).

The ABM domain occupies 2–91 (HVTLVEINVK…MTGPRKKTVF (90 aa)).

This sequence belongs to the LsrG family. In terms of assembly, homodimer.

The protein localises to the cytoplasm. It carries out the reaction (2S)-2-hydroxy-3,4-dioxopentyl phosphate = 3-hydroxy-2,4-dioxopentyl phosphate. In terms of biological role, involved in the degradation of phospho-AI-2, thereby terminating induction of the lsr operon and closing the AI-2 signaling cycle. Catalyzes the conversion of (4S)-4-hydroxy-5-phosphonooxypentane-2,3-dione (P-DPD) to 3-hydroxy-5-phosphonooxypentane-2,4-dione (P-HPD). The chain is (4S)-4-hydroxy-5-phosphonooxypentane-2,3-dione isomerase from Yersinia pseudotuberculosis serotype O:1b (strain IP 31758).